The chain runs to 478 residues: GDP-fucose protein O-fucosyltransferase 3 (478 aa).

Residues 1–9 lie on the Cytoplasmic side of the membrane; that stretch reads MVRIQRGKL. A helical; Signal-anchor for type II membrane protein transmembrane segment spans residues 10 to 30; the sequence is LAFCLCVMATVFLLITLQVVV. Residues 31-478 lie on the Lumenal side of the membrane; the sequence is ELGKFEGKKF…QEFWALVFKD (448 aa). 2 N-linked (GlcNAc...) asparagine glycosylation sites follow: Asn-110 and Asn-168. Cysteines 389 and 392 form a disulfide.

It belongs to the glycosyltransferase 10 family.

Its subcellular location is the endoplasmic reticulum membrane. It catalyses the reaction L-threonyl-[protein] + GDP-beta-L-fucose = 3-O-(alpha-L-fucosyl)-L-threonyl-[protein] + GDP + H(+). The enzyme catalyses L-seryl-[protein] + GDP-beta-L-fucose = 3-O-(alpha-L-fucosyl)-L-seryl-[protein] + GDP + H(+). The protein operates within protein modification; protein glycosylation. Functionally, protein O-fucosyltransferase that specifically catalyzes O-fucosylation of serine or threonine residues in EMI domains of target proteins, such as MMRN1, MMRN2 and EMID1. Attaches fucose through an O-glycosidic linkage. O-fucosylation of EMI domain-containing proteins may be required for facilitating protein folding and secretion. May also show alpha-(1,3)-fucosyltransferase activity toward the innermost N-acetyl glucosamine (GlcNAc) residue in biantennary N-glycan acceptors. However, this was tested with a library of synthetic substrates and this activity is unsure in vivo. May be involved in biosynthesis of Lewis X-carrying biantennary N-glycans that regulate neuron stem cell self-renewal during brain development. This Bos taurus (Bovine) protein is GDP-fucose protein O-fucosyltransferase 3 (FUT10).